A 212-amino-acid chain; its full sequence is Glutathione S-transferase P 1 (212 aa).

A GST N-terminal domain is found at 2–83 (PGYVLTYFPV…YLGNKHGLTG (82 aa)). Residues Tyr8, Arg14, Trp39, Lys47, 54–55 (QL), and 67–68 (QS) each bind glutathione. The region spanning 85-206 (NDEERGHIDM…KSDARNKRPI (122 aa)) is the GST C-terminal domain.

This sequence belongs to the GST superfamily. Pi family. As to quaternary structure, homodimer. As to expression, expressed only in embryos. Not expressed in liver, lung, heart, kidney and ovary.

It localises to the cytoplasm. The protein resides in the mitochondrion. The protein localises to the nucleus. The enzyme catalyses RX + glutathione = an S-substituted glutathione + a halide anion + H(+). Functionally, conjugation of reduced glutathione to a wide number of exogenous and endogenous hydrophobic electrophiles. Highly active towards 1-chloro-2,4-dinitrobenzene and organic isothiocyanates, but shows no detectable activity towards 1,2-dichloro-4-nitrobenzene, p-nitrobenzylchloride, trans-4-phenyl-3-buten-2-one (tPBO) and ethacrynic acid. May be associated with cellular proliferation. The polypeptide is Glutathione S-transferase P 1 (gstp1) (Xenopus laevis (African clawed frog)).